Here is a 925-residue protein sequence, read N- to C-terminus: NADH:fumarate oxidoreductase (925 aa).

Thr-447 bears the FMN phosphoryl threonine mark. Positions 492, 511, 519, 520, 525, 526, and 633 each coordinate FAD. Residue Ala-525 participates in fumarate binding. Ala-525 contributes to the succinate binding site. Succinate-binding residues include His-719, Ser-731, and Glu-732. Fumarate is bound by residues Ser-731 and Glu-732. Arg-756 (proton donor) is an active-site residue. His-859 is a binding site for fumarate. A succinate-binding site is contributed by His-859. The FAD site is built by His-860 and Glu-889. Residues Arg-899 and Gly-902 each contribute to the fumarate site. Succinate contacts are provided by Arg-899 and Gly-902. Ala-904 and Val-905 together coordinate FAD.

It belongs to the FAD-dependent oxidoreductase 2 family. FRD/SDH subfamily. In terms of assembly, monomer. It depends on FAD as a cofactor. The cofactor is FMN. Post-translationally, is flavinylated on Thr-447 by ApbE2, encoded in a neighboring gene. Flavinylation is essential for catalytic activity.

It localises to the cytoplasm. It carries out the reaction succinate + NAD(+) = fumarate + NADH + H(+). In terms of biological role, catalyzes the anaerobic reduction of fumarate to succinate. Uses NADH as the inherent electron donor in this process. Is involved in anaerobic fumarate respiration in K.pneumoniae. This chain is NADH:fumarate oxidoreductase, found in Klebsiella pneumoniae (strain 342).